The following is a 336-amino-acid chain: Probable allantoicase (336 aa).

Belongs to the allantoicase family.

The catalysed reaction is allantoate + H2O = (S)-ureidoglycolate + urea. It functions in the pathway nitrogen metabolism; (S)-allantoin degradation; (S)-ureidoglycolate from allantoate (aminidohydrolase route): step 1/1. The sequence is that of Probable allantoicase from Ralstonia nicotianae (strain ATCC BAA-1114 / GMI1000) (Ralstonia solanacearum).